The chain runs to 341 residues: Ketol-acid reductoisomerase (NADP(+)) (341 aa).

Residues 3 to 184 enclose the KARI N-terminal Rossmann domain; sequence LKVYYDKDCD…GGGRSGIIET (182 aa). NADP(+) is bound by residues 26 to 29, S54, and 84 to 87; these read FGSQ and DELQ. The active site involves H109. G135 serves as a coordination point for NADP(+). Positions 185–330 constitute a KARI C-terminal knotted domain; the sequence is TFKDETETDL…GRLRAMMPWI (146 aa). D193, E197, E229, and E233 together coordinate Mg(2+). S254 serves as a coordination point for substrate.

This sequence belongs to the ketol-acid reductoisomerase family. Mg(2+) is required as a cofactor.

The catalysed reaction is (2R)-2,3-dihydroxy-3-methylbutanoate + NADP(+) = (2S)-2-acetolactate + NADPH + H(+). It carries out the reaction (2R,3R)-2,3-dihydroxy-3-methylpentanoate + NADP(+) = (S)-2-ethyl-2-hydroxy-3-oxobutanoate + NADPH + H(+). Its pathway is amino-acid biosynthesis; L-isoleucine biosynthesis; L-isoleucine from 2-oxobutanoate: step 2/4. The protein operates within amino-acid biosynthesis; L-valine biosynthesis; L-valine from pyruvate: step 2/4. Its function is as follows. Involved in the biosynthesis of branched-chain amino acids (BCAA). Catalyzes an alkyl-migration followed by a ketol-acid reduction of (S)-2-acetolactate (S2AL) to yield (R)-2,3-dihydroxy-isovalerate. In the isomerase reaction, S2AL is rearranged via a Mg-dependent methyl migration to produce 3-hydroxy-3-methyl-2-ketobutyrate (HMKB). In the reductase reaction, this 2-ketoacid undergoes a metal-dependent reduction by NADPH to yield (R)-2,3-dihydroxy-isovalerate. This is Ketol-acid reductoisomerase (NADP(+)) from Helicobacter hepaticus (strain ATCC 51449 / 3B1).